We begin with the raw amino-acid sequence, 113 residues long: MNTLDFVDQASLREDVPDFRPGDTINVHVKVIEGSKERIQVFKGVVLRRSGGGVSATFTVRKESYGVGVERTFPVHSPNIDHIEILTRGAVRRAKLYYLRELRGKKAKIKEKR.

Belongs to the bacterial ribosomal protein bL19 family.

Functionally, this protein is located at the 30S-50S ribosomal subunit interface and may play a role in the structure and function of the aminoacyl-tRNA binding site. This Mycobacteroides abscessus (strain ATCC 19977 / DSM 44196 / CCUG 20993 / CIP 104536 / JCM 13569 / NCTC 13031 / TMC 1543 / L948) (Mycobacterium abscessus) protein is Large ribosomal subunit protein bL19.